We begin with the raw amino-acid sequence, 287 residues long: MLAMTKAKAFCQLARFDRPIGSLLLLWPTLWALFLAADGLPNMHVLVVFVLGVVFMRAAGCVINDFADRNFDGHVKRTAKRPMPSGKISEREALGLFGLLVLVSFVLVLTMNTLTIMLSVVGLVLAAAYPFMKRYTHLPQLVLGMAFGWSIPMAYAAQAGELPVVAWLLFTANILWTIAYDTQYAMVDRDDDLKVGIKSAAILFGRFDKIIIGVLQLSTLVTMILIGHSLDLHQIYYWFLLMASGLFVYQQRLIGSREREPCFKAFLNNNYVGMLIFLGIAISVMMQ.

The next 9 helical transmembrane spans lie at 20 to 40 (IGSLLLLWPTLWALFLAADGL), 43 to 63 (MHVLVVFVLGVVFMRAAGCVI), 94 to 114 (LGLFGLLVLVSFVLVLTMNTL), 115 to 135 (TIMLSVVGLVLAAAYPFMKRY), 137 to 157 (HLPQLVLGMAFGWSIPMAYAA), 159 to 179 (AGELPVVAWLLFTANILWTIA), 210 to 230 (IIIGVLQLSTLVTMILIGHSL), 235 to 255 (IYYWFLLMASGLFVYQQRLIG), and 266 to 286 (FLNNNYVGMLIFLGIAISVMM).

Belongs to the UbiA prenyltransferase family. Mg(2+) serves as cofactor.

The protein resides in the cell inner membrane. The catalysed reaction is all-trans-octaprenyl diphosphate + 4-hydroxybenzoate = 4-hydroxy-3-(all-trans-octaprenyl)benzoate + diphosphate. The protein operates within cofactor biosynthesis; ubiquinone biosynthesis. Its function is as follows. Catalyzes the prenylation of para-hydroxybenzoate (PHB) with an all-trans polyprenyl group. Mediates the second step in the final reaction sequence of ubiquinone-8 (UQ-8) biosynthesis, which is the condensation of the polyisoprenoid side chain with PHB, generating the first membrane-bound Q intermediate 3-octaprenyl-4-hydroxybenzoate. In Photobacterium profundum (strain SS9), this protein is 4-hydroxybenzoate octaprenyltransferase.